A 542-amino-acid chain; its full sequence is 2,3-bisphosphoglycerate-independent phosphoglycerate mutase (542 aa).

Positions 24 and 74 each coordinate Mn(2+). Serine 74 (phosphoserine intermediate) is an active-site residue. Residues histidine 135, arginine 165–aspartate 166, arginine 197, arginine 203, arginine 268–arginine 271, and lysine 341 contribute to the substrate site. Aspartate 408, histidine 412, aspartate 449, histidine 450, and histidine 467 together coordinate Mn(2+).

It belongs to the BPG-independent phosphoglycerate mutase family. Monomer. Mn(2+) serves as cofactor.

The enzyme catalyses (2R)-2-phosphoglycerate = (2R)-3-phosphoglycerate. It functions in the pathway carbohydrate degradation; glycolysis; pyruvate from D-glyceraldehyde 3-phosphate: step 3/5. Its function is as follows. Catalyzes the interconversion of 2-phosphoglycerate and 3-phosphoglycerate. The chain is 2,3-bisphosphoglycerate-independent phosphoglycerate mutase from Prochlorococcus marinus (strain NATL1A).